A 416-amino-acid chain; its full sequence is Proline-serine-threonine phosphatase-interacting protein 1 (416 aa).

The 260-residue stretch at 5-264 (LQFKDAFWCR…TLEGCSIDAD (260 aa)) folds into the F-BAR domain. Residues 166–212 (HQKQVEKSQNKARQCKDSATEAERVYRQSIAQLEKVRAEWEQEHRTT) are a coiled coil. Ser-318 carries the post-translational modification Phosphoserine. The residue at position 345 (Tyr-345) is a Phosphotyrosine. An SH3 domain is found at 359-416 (SPAQEYRALYDYTAQNPDELDLSAGDILEVILEGEDGWWTVERNGQRGFVPGSYLEKL).

In terms of assembly, homodimer. Homotrimer. Interacts (via coiled-coil domain) with CD2AP, PTPN12 and PTPN18. Interacts (via SH3 domain) with ABL1 and WAS. Interacts (via SH3 and coiled-coil domains) with MEFV (via B-box zinc finger); the interaction allows binding of MEFV to PYCARD and facilitates formation of PYCARD pyroptosomes. Interacts with CD2, DNM2 and FASLG. Dephosphorylated on Tyr-345 by PTPN18, this event negatively regulates the association of PSTPIP1 with SH2 domain-containing proteins as tyrosine kinase. Phosphorylation of Tyr-345 is probably required for subsequent phosphorylation at other tyrosine residues. Phosphorylation is induced by activation of the EGFR and PDGFR in a ABL1 dependent manner. The phosphorylation regulates the interaction with WAS and with MEFV. As to expression, highly expressed in the peripheral blood leukocytes, granulocytes and monocytes, namely in T-cells and natural killer cells, and in spleen. Weakly expressed in the thymus, small intestine, lung and placenta.

Its subcellular location is the cytoplasm. It localises to the cell membrane. It is found in the cell projection. The protein localises to the uropodium. The protein resides in the cytoskeleton. Its subcellular location is the perinuclear region. It localises to the lamellipodium. It is found in the cleavage furrow. Functionally, involved in regulation of the actin cytoskeleton. May regulate WAS actin-bundling activity. Bridges the interaction between ABL1 and PTPN18 leading to ABL1 dephosphorylation. May play a role as a scaffold protein between PTPN12 and WAS and allow PTPN12 to dephosphorylate WAS. Has the potential to physically couple CD2 and CD2AP to WAS. Acts downstream of CD2 and CD2AP to recruit WAS to the T-cell:APC contact site so as to promote the actin polymerization required for synapse induction during T-cell activation. Down-regulates CD2-stimulated adhesion through the coupling of PTPN12 to CD2. Also has a role in innate immunity and the inflammatory response. Recruited to inflammasomes by MEFV. Induces formation of pyroptosomes, large supramolecular structures composed of oligomerized PYCARD dimers which form prior to inflammatory apoptosis. Binding to MEFV allows MEFV to bind to PYCARD and facilitates pyroptosome formation. Regulates endocytosis and cell migration in neutrophils. The chain is Proline-serine-threonine phosphatase-interacting protein 1 (PSTPIP1) from Homo sapiens (Human).